A 201-amino-acid polypeptide reads, in one-letter code: Recombination protein RecR (201 aa).

Residues 60–75 form a C4-type zinc finger; sequence CSCCGNVDTSDPCTIC. The region spanning 83 to 178 is the Toprim domain; that stretch reads ATLIVVEDVS…RVTRLAHGVP (96 aa).

The protein belongs to the RecR family.

In terms of biological role, may play a role in DNA repair. It seems to be involved in an RecBC-independent recombinational process of DNA repair. It may act with RecF and RecO. The protein is Recombination protein RecR of Brucella abortus biovar 1 (strain 9-941).